The chain runs to 349 residues: Heat-inducible transcription repressor HrcA (349 aa).

The protein belongs to the HrcA family.

Functionally, negative regulator of class I heat shock genes (grpE-dnaK-dnaJ and groELS operons). Prevents heat-shock induction of these operons. The chain is Heat-inducible transcription repressor HrcA from Xylella fastidiosa (strain M23).